The following is a 51-amino-acid chain: Methionine aminopeptidase (51 aa).

Belongs to the peptidase M24A family. Methionine aminopeptidase type 1 subfamily. Monomer. Co(2+) is required as a cofactor. Zn(2+) serves as cofactor. Requires Mn(2+) as cofactor. It depends on Fe(2+) as a cofactor.

The enzyme catalyses Release of N-terminal amino acids, preferentially methionine, from peptides and arylamides.. Its function is as follows. Removes the N-terminal methionine from nascent proteins. The N-terminal methionine is often cleaved when the second residue in the primary sequence is small and uncharged (Met-Ala-, Cys, Gly, Pro, Ser, Thr, or Val). Requires deformylation of the N(alpha)-formylated initiator methionine before it can be hydrolyzed. The protein is Methionine aminopeptidase (map) of Geobacillus stearothermophilus (Bacillus stearothermophilus).